The following is a 135-amino-acid chain: Small ribosomal subunit protein bS16 (135 aa).

The segment at 106–135 is disordered; it reads TERRQKRLVVKSRRRQAKKEAEGKAAGAEA. Positions 109-122 are enriched in basic residues; that stretch reads RQKRLVVKSRRRQA.

The protein belongs to the bacterial ribosomal protein bS16 family.

The sequence is that of Small ribosomal subunit protein bS16 from Chlorobium phaeobacteroides (strain DSM 266 / SMG 266 / 2430).